A 125-amino-acid chain; its full sequence is Holo-[acyl-carrier-protein] synthase (125 aa).

Residues D8 and E57 each coordinate Mg(2+).

It belongs to the P-Pant transferase superfamily. AcpS family. Mg(2+) serves as cofactor.

Its subcellular location is the cytoplasm. It catalyses the reaction apo-[ACP] + CoA = holo-[ACP] + adenosine 3',5'-bisphosphate + H(+). Transfers the 4'-phosphopantetheine moiety from coenzyme A to a Ser of acyl-carrier-protein. In Laribacter hongkongensis (strain HLHK9), this protein is Holo-[acyl-carrier-protein] synthase.